Consider the following 85-residue polypeptide: UPF0291 protein SSA_1878 (85 aa).

Residues 58–85 (GNDVTPEKLRQVQREKGLHGRSLDDPES) are disordered. A compositionally biased stretch (basic and acidic residues) spans 62–85 (TPEKLRQVQREKGLHGRSLDDPES).

This sequence belongs to the UPF0291 family.

It is found in the cytoplasm. The polypeptide is UPF0291 protein SSA_1878 (Streptococcus sanguinis (strain SK36)).